Here is a 509-residue protein sequence, read N- to C-terminus: Methionine--tRNA ligase (509 aa).

The 'HIGH' region signature appears at 12–22 (YYPSGDLHLGH). Residues 302 to 306 (KMSKS) carry the 'KMSKS' region motif. Lys305 is an ATP binding site.

The protein belongs to the class-I aminoacyl-tRNA synthetase family. MetG type 2B subfamily. As to quaternary structure, monomer.

Its subcellular location is the cytoplasm. The enzyme catalyses tRNA(Met) + L-methionine + ATP = L-methionyl-tRNA(Met) + AMP + diphosphate. Functionally, is required not only for elongation of protein synthesis but also for the initiation of all mRNA translation through initiator tRNA(fMet) aminoacylation. The chain is Methionine--tRNA ligase (metG) from Mycoplasmopsis pulmonis (strain UAB CTIP) (Mycoplasma pulmonis).